A 161-amino-acid polypeptide reads, in one-letter code: Nucleotide-binding protein Pnuc_0290 (161 aa).

It belongs to the YajQ family.

Functionally, nucleotide-binding protein. The protein is Nucleotide-binding protein Pnuc_0290 of Polynucleobacter asymbioticus (strain DSM 18221 / CIP 109841 / QLW-P1DMWA-1) (Polynucleobacter necessarius subsp. asymbioticus).